A 162-amino-acid polypeptide reads, in one-letter code: Phosphopantetheine adenylyltransferase (162 aa).

Thr10 is a substrate binding site. Residues 10 to 11 (TF) and His18 each bind ATP. Substrate is bound by residues Lys42, Leu74, and Arg88. ATP contacts are provided by residues 89-91 (GLR), Glu99, and 124-130 (FSCISST).

It belongs to the bacterial CoaD family. Homohexamer. Mg(2+) serves as cofactor.

Its subcellular location is the cytoplasm. The enzyme catalyses (R)-4'-phosphopantetheine + ATP + H(+) = 3'-dephospho-CoA + diphosphate. Its pathway is cofactor biosynthesis; coenzyme A biosynthesis; CoA from (R)-pantothenate: step 4/5. Functionally, reversibly transfers an adenylyl group from ATP to 4'-phosphopantetheine, yielding dephospho-CoA (dPCoA) and pyrophosphate. The protein is Phosphopantetheine adenylyltransferase of Francisella philomiragia subsp. philomiragia (strain ATCC 25017 / CCUG 19701 / FSC 153 / O#319-036).